The primary structure comprises 593 residues: MKRFIPHRVIHAVCIGLALVGCRKLDSRAGDFELTIIHINDHHSHLEPEPLELAVAGERLRAAVGGYAALVHEIQRLRAESKNALVLHAGDALIGTLYSTLFRGRADAVLMNHAGFDFFTLGNHEFDNGNEGLKEFLHYLEVPVLSANVVPNAASTLHGLWKPSAIVERAGERIGVIGLDTVKKTVESSSPGKDINFIDEIEAVRRATVEMQQQGVNKIILLSHAGFEKNCEIAQNISGIDVIVSGDTHYLLGDESLGRLGLPVVGEYPRKIMSPAGEPVYVVEAWEYGKCLGELNVVFDRTGVITSAVGMPRFLLHTNTLQKKGADRKNYPLEEAEREALLVALRMTPEIIFAQENDQIISVLEEFKKEKEALGAQAIGVITGASMRGGSVHRVPDAQNPQGSVATRFVAETMLSDIQSFGAGKVDCVIQNAGGARSNIQPGEITYNDAYTLLPFSNTLVLVDVSGAELKQIIEDALQFALGDGSTGAFPYGAGVRYEARQEPDEHGKRVIKLEVQKKDGAWVPVDERAPYRLGVNSYIARGKDGYKTLGEIVSTRGAEDTYLRDAESLIKFLRAHKNFRAYTDSNVIFRLK.

A signal peptide spans methionine 1–glycine 21. A lipid anchor (N-palmitoyl cysteine) is attached at cysteine 22. The S-diacylglycerol cysteine moiety is linked to residue cysteine 22. A divalent metal cation is bound by residues aspartate 41, histidine 43, aspartate 91, asparagine 123, and histidine 224. Substrate is bound by residues phenylalanine 456 and tyrosine 539–aspartate 545.

It belongs to the 5'-nucleotidase family. A divalent metal cation serves as cofactor.

The protein localises to the cell membrane. The catalysed reaction is a ribonucleoside 5'-phosphate + H2O = a ribonucleoside + phosphate. In Treponema pallidum (strain Nichols), this protein is Probable 5'-nucleotidase.